Reading from the N-terminus, the 124-residue chain is Large ribosomal subunit protein bL12 (124 aa).

It belongs to the bacterial ribosomal protein bL12 family. As to quaternary structure, homodimer. Part of the ribosomal stalk of the 50S ribosomal subunit. Forms a multimeric L10(L12)X complex, where L10 forms an elongated spine to which 2 to 4 L12 dimers bind in a sequential fashion. Binds GTP-bound translation factors.

In terms of biological role, forms part of the ribosomal stalk which helps the ribosome interact with GTP-bound translation factors. Is thus essential for accurate translation. In Cupriavidus necator (strain ATCC 17699 / DSM 428 / KCTC 22496 / NCIMB 10442 / H16 / Stanier 337) (Ralstonia eutropha), this protein is Large ribosomal subunit protein bL12.